Consider the following 146-residue polypeptide: Large ribosomal subunit protein uL15 (146 aa).

Residues 1–13 are compositionally biased toward basic and acidic residues; sequence MKLHELKPAEGSR. The disordered stretch occupies residues 1 to 47; that stretch reads MKLHELKPAEGSRKSRKRIGRGTGSGLGRNAGKGEKGQKARAGGGVR. Positions 21 to 31 are enriched in gly residues; it reads RGTGSGLGRNA.

This sequence belongs to the universal ribosomal protein uL15 family. In terms of assembly, part of the 50S ribosomal subunit.

Its function is as follows. Binds to the 23S rRNA. The polypeptide is Large ribosomal subunit protein uL15 (Clostridium kluyveri (strain NBRC 12016)).